The primary structure comprises 219 residues: Small ribosomal subunit protein uS3c (219 aa).

Positions 43–118 (IKNYVQNNMI…KLNITITRIE (76 aa)) constitute a KH type-2 domain.

Belongs to the universal ribosomal protein uS3 family. As to quaternary structure, part of the 30S ribosomal subunit.

The protein resides in the plastid. This Cuscuta exaltata (Tall dodder) protein is Small ribosomal subunit protein uS3c (rps3).